A 252-amino-acid chain; its full sequence is 3-dehydroquinate dehydratase (252 aa).

Residues Ser21, 46-48, and Arg82 each bind 3-dehydroquinate; that span reads EWR. His143 acts as the Proton donor/acceptor in catalysis. Catalysis depends on Lys170, which acts as the Schiff-base intermediate with substrate. Residues Arg213, Ser232, and Gln236 each contribute to the 3-dehydroquinate site.

Belongs to the type-I 3-dehydroquinase family. As to quaternary structure, dimer of dimers.

It carries out the reaction 3-dehydroquinate = 3-dehydroshikimate + H2O. The protein operates within metabolic intermediate biosynthesis; chorismate biosynthesis; chorismate from D-erythrose 4-phosphate and phosphoenolpyruvate: step 3/7. With respect to regulation, inhibited by (2R)-2-methyl-3-dehydroquinic acid. Functionally, involved in the third step of the chorismate pathway, which leads to the biosynthesis of aromatic amino acids. Catalyzes the cis-dehydration of 3-dehydroquinate (DHQ) and introduces the first double bond of the aromatic ring to yield 3-dehydroshikimate. The reaction involves the formation of an imine intermediate between the keto group of 3-dehydroquinate and the epsilon-amino group of Lys-170 at the active site. In Salmonella typhi, this protein is 3-dehydroquinate dehydratase.